The primary structure comprises 194 residues: Large ribosomal subunit protein eL15 (194 aa).

Positions 162-173 are enriched in basic residues; it reads KTSAGRRARGLH. The disordered stretch occupies residues 162–194; sequence KTSAGRRARGLHNRGTGTEKCRPSLTSHKNQGK. The segment covering 185–194 has biased composition (polar residues); the sequence is SLTSHKNQGK.

This sequence belongs to the eukaryotic ribosomal protein eL15 family.

The chain is Large ribosomal subunit protein eL15 from Methanocorpusculum labreanum (strain ATCC 43576 / DSM 4855 / Z).